The following is a 356-amino-acid chain: Histidinol-phosphate aminotransferase (356 aa).

N6-(pyridoxal phosphate)lysine is present on K214.

This sequence belongs to the class-II pyridoxal-phosphate-dependent aminotransferase family. Histidinol-phosphate aminotransferase subfamily. In terms of assembly, homodimer. Pyridoxal 5'-phosphate serves as cofactor.

It catalyses the reaction L-histidinol phosphate + 2-oxoglutarate = 3-(imidazol-4-yl)-2-oxopropyl phosphate + L-glutamate. Its pathway is amino-acid biosynthesis; L-histidine biosynthesis; L-histidine from 5-phospho-alpha-D-ribose 1-diphosphate: step 7/9. This is Histidinol-phosphate aminotransferase from Shigella flexneri serotype 5b (strain 8401).